Here is an 83-residue protein sequence, read N- to C-terminus: Disintegrin isoform D-3 (83 aa).

Residues 2–83 (PPVCGNELLE…GKSSDCPWNH (82 aa)) form the Disintegrin domain. 7 disulfides stabilise this stretch: Cys-5–Cys-24, Cys-16–Cys-34, Cys-18–Cys-29, Cys-28–Cys-51, Cys-42–Cys-48, Cys-47–Cys-72, and Cys-60–Cys-79. Residues 64–66 (RGD) carry the Cell attachment site motif.

The protein belongs to the venom metalloproteinase (M12B) family. P-II subfamily. P-IIa sub-subfamily. In terms of assembly, monomer (disintegrin). Expressed by the venom gland.

The protein resides in the secreted. Functionally, inhibits fibrinogen interaction with platelets. Acts by binding to alpha-IIb/beta-3 (ITGA2B/ITGB3) on the platelet surface and inhibits aggregation induced by ADP, thrombin, platelet-activating factor and collagen. The protein is Disintegrin isoform D-3 of Bitis arietans (African puff adder).